Consider the following 284-residue polypeptide: Tropomyosin (284 aa).

Positions 1-284 form a coiled coil; it reads MDAIKKKMVA…DATFAELAGY (284 aa). The span at 32-41 shows a compositional bias: basic and acidic residues; sequence TEEAKAKIED. The disordered stretch occupies residues 32 to 60; the sequence is TEEAKAKIEDDYNSLQKKSIQTENDLDNT. A compositionally biased stretch (polar residues) spans 44-60; it reads NSLQKKSIQTENDLDNT.

Belongs to the tropomyosin family. In terms of assembly, homodimer.

Its function is as follows. Tropomyosin, in association with the troponin complex, plays a central role in the calcium dependent regulation of muscle contraction. The chain is Tropomyosin from Mytilus edulis (Blue mussel).